Reading from the N-terminus, the 100-residue chain is Large ribosomal subunit protein uL23 (100 aa).

This sequence belongs to the universal ribosomal protein uL23 family. Part of the 50S ribosomal subunit. Contacts protein L29, and trigger factor when it is bound to the ribosome.

One of the early assembly proteins it binds 23S rRNA. One of the proteins that surrounds the polypeptide exit tunnel on the outside of the ribosome. Forms the main docking site for trigger factor binding to the ribosome. The sequence is that of Large ribosomal subunit protein uL23 from Vibrio atlanticus (strain LGP32) (Vibrio splendidus (strain Mel32)).